Here is a 446-residue protein sequence, read N- to C-terminus: Tol-Pal system protein TolB (446 aa).

The N-terminal stretch at 1 to 24 is a signal peptide; sequence MKRAFLSALSVGLAALFLTGPAQA.

It belongs to the TolB family. The Tol-Pal system is composed of five core proteins: the inner membrane proteins TolA, TolQ and TolR, the periplasmic protein TolB and the outer membrane protein Pal. They form a network linking the inner and outer membranes and the peptidoglycan layer.

The protein resides in the periplasm. Functionally, part of the Tol-Pal system, which plays a role in outer membrane invagination during cell division and is important for maintaining outer membrane integrity. This is Tol-Pal system protein TolB from Dinoroseobacter shibae (strain DSM 16493 / NCIMB 14021 / DFL 12).